Reading from the N-terminus, the 130-residue chain is Small ribosomal subunit protein uS11 (130 aa).

The protein belongs to the universal ribosomal protein uS11 family. Part of the 30S ribosomal subunit. Interacts with proteins S7 and S18. Binds to IF-3.

Its function is as follows. Located on the platform of the 30S subunit, it bridges several disparate RNA helices of the 16S rRNA. Forms part of the Shine-Dalgarno cleft in the 70S ribosome. The chain is Small ribosomal subunit protein uS11 from Gloeobacter violaceus (strain ATCC 29082 / PCC 7421).